The primary structure comprises 389 residues: tRNA-specific 2-thiouridylase MnmA (389 aa).

Residues 21-28 and leucine 47 contribute to the ATP site; that span reads AMSGGVDS. The active-site Nucleophile is cysteine 115. Residues cysteine 115 and cysteine 212 are joined by a disulfide bond. Glycine 139 contributes to the ATP binding site. Residues 162–164 are interaction with tRNA; that stretch reads RDQ. Cysteine 212 acts as the Cysteine persulfide intermediate in catalysis.

This sequence belongs to the MnmA/TRMU family.

The protein resides in the cytoplasm. The enzyme catalyses S-sulfanyl-L-cysteinyl-[protein] + uridine(34) in tRNA + AH2 + ATP = 2-thiouridine(34) in tRNA + L-cysteinyl-[protein] + A + AMP + diphosphate + H(+). In terms of biological role, catalyzes the 2-thiolation of uridine at the wobble position (U34) of tRNA, leading to the formation of s(2)U34. This is tRNA-specific 2-thiouridylase MnmA from Xanthobacter autotrophicus (strain ATCC BAA-1158 / Py2).